Consider the following 162-residue polypeptide: MKLSDIADNAGSRKKRMRVGRGIGSGKGKTAGRGGKGQTARSGVRIKGFEGGQMPLHRRLPKRGFNNIFRLDFAEINLDRLQEAVDAKTIDGSGVINAETLVASGVLRRAKDGVRLLGRGELKAKLTIEVHGATKTAIEAVEKAGGTVKILAPAKKDEGEAA.

Residues 1 to 41 (MKLSDIADNAGSRKKRMRVGRGIGSGKGKTAGRGGKGQTAR) are disordered. The segment covering 21-37 (RGIGSGKGKTAGRGGKG) has biased composition (gly residues).

This sequence belongs to the universal ribosomal protein uL15 family. In terms of assembly, part of the 50S ribosomal subunit.

In terms of biological role, binds to the 23S rRNA. The polypeptide is Large ribosomal subunit protein uL15 (Rhodopseudomonas palustris (strain BisB18)).